Reading from the N-terminus, the 241-residue chain is Pyrroloquinoline-quinone synthase (241 aa).

It belongs to the PqqC family.

The enzyme catalyses 6-(2-amino-2-carboxyethyl)-7,8-dioxo-1,2,3,4,7,8-hexahydroquinoline-2,4-dicarboxylate + 3 O2 = pyrroloquinoline quinone + 2 H2O2 + 2 H2O + H(+). It participates in cofactor biosynthesis; pyrroloquinoline quinone biosynthesis. Its function is as follows. Ring cyclization and eight-electron oxidation of 3a-(2-amino-2-carboxyethyl)-4,5-dioxo-4,5,6,7,8,9-hexahydroquinoline-7,9-dicarboxylic-acid to PQQ. This chain is Pyrroloquinoline-quinone synthase, found in Ruegeria pomeroyi (strain ATCC 700808 / DSM 15171 / DSS-3) (Silicibacter pomeroyi).